The following is a 234-amino-acid chain: tRNA1(Val) (adenine(37)-N6)-methyltransferase (234 aa).

Belongs to the methyltransferase superfamily. tRNA (adenine-N(6)-)-methyltransferase family.

The protein localises to the cytoplasm. The catalysed reaction is adenosine(37) in tRNA1(Val) + S-adenosyl-L-methionine = N(6)-methyladenosine(37) in tRNA1(Val) + S-adenosyl-L-homocysteine + H(+). Specifically methylates the adenine in position 37 of tRNA(1)(Val) (anticodon cmo5UAC). This chain is tRNA1(Val) (adenine(37)-N6)-methyltransferase, found in Aliivibrio salmonicida (strain LFI1238) (Vibrio salmonicida (strain LFI1238)).